The sequence spans 228 residues: Putative adhesin A1I_01215 (228 aa).

A signal peptide spans 1–22; the sequence is MKKLLLIAATSATVLSSALSFA.

This Rickettsia bellii (strain OSU 85-389) protein is Putative adhesin A1I_01215.